The following is a 1685-amino-acid chain: PHD and RING finger domain-containing protein 1 (1685 aa).

Residues 1–82 are disordered; sequence MDDDNLDELV…GSEDSEDGIE (82 aa). Residues 41 to 81 are compositionally biased toward acidic residues; the sequence is DSEDDTGSEQDDDTDGEETEGLSEEEDPEDRSGSEDSEDGI. The segment at 109 to 150 adopts an RING-type; degenerate zinc-finger fold; the sequence is CPICLNAFRDQAVGTPETCAHYFCLDCIIEWSRNANSCPVDR. The segment at 188-238 adopts a PHD-type zinc-finger fold; it reads PTFCEVCGRSDREDRLLLCDGCDAGYHMECLDPPLQEVPVDEWFCPECAVP. Disordered stretches follow at residues 333-390, 449-483, 537-590, 606-777, and 809-860; these read PLTP…KLKN, DSNG…VARP, SAKR…GLSC, TPVR…GSSF, and KVQR…LLPS. Thr335 carries the phosphothreonine modification. 2 stretches are compositionally biased toward basic residues: residues 339-364 and 372-387; these read PAKR…RSSV and RAKK…KGRK. Ser450 and Ser460 each carry phosphoserine. Composition is skewed to polar residues over residues 606–625 and 637–662; these read TPVR…GNLS and SPRL…NFPS. A compositionally biased stretch (basic and acidic residues) spans 671 to 682; that stretch reads QKTDPRRPDFSK. Polar residues-rich tracts occupy residues 694–709 and 737–751; these read SNST…QTVE and SSRG…TSGS. Phosphoserine is present on residues Ser817, Ser848, Ser849, Ser867, Ser870, Ser922, Ser948, Ser984, and Ser1002. Over residues 835–860 the composition is skewed to low complexity; sequence PFDPTGSDSSPPSSSPESLGSGLLPS. 3 disordered regions span residues 892–1229, 1290–1355, and 1369–1390; these read GTEM…VSEV, QLDD…APSD, and TTLS…SGRG. Residues 922–934 are compositionally biased toward acidic residues; sequence SDLEQEGLGEIEP. The segment covering 1001-1010 has biased composition (low complexity); that stretch reads SSRSRSTSSS. 2 stretches are compositionally biased toward basic residues: residues 1011–1031 and 1054–1064; these read RSRK…RTRS and KRHRAKTKSRR. A compositionally biased stretch (basic and acidic residues) spans 1065–1075; the sequence is SSSDRASSQDR. 2 stretches are compositionally biased toward basic residues: residues 1089–1102 and 1117–1129; these read GPWG…KSRS and SRRR…GSRS. Basic and acidic residues-rich tracts occupy residues 1130–1143 and 1151–1165; these read RGRD…LERD and RSRE…MTRS. Ser1135 and Ser1139 each carry phosphoserine. Over residues 1181–1191 the composition is skewed to basic residues; it reads RTRRPHSREKH. Residues 1192 to 1201 are compositionally biased toward basic and acidic residues; sequence PHSPEKKGAV. Residue Ser1205 is modified to Phosphoserine. Residues 1292-1305 show a composition bias toward low complexity; sequence DDMSSPPSPESTDS. Residues Ser1372 and Ser1383 each carry the phosphoserine modification. At Thr1416 the chain carries Phosphothreonine. 3 disordered regions span residues 1421–1448, 1466–1501, and 1569–1591; these read EAEA…EGDW, LPPP…VGTL, and LAVP…AEKT. The span at 1577 to 1591 shows a compositional bias: basic and acidic residues; it reads SEERTATPKTAAEKT. Positions 1589–1615 form a coiled coil; that stretch reads EKTKKEEYMKKLHMQERAVEEVKLAIK.

As to quaternary structure, interacts with POLR2A (via the C-terminal domain).

This Rattus norvegicus (Rat) protein is PHD and RING finger domain-containing protein 1.